The following is a 151-amino-acid chain: 3-dehydroquinate dehydratase (151 aa).

Residue Y24 is the Proton acceptor of the active site. The substrate site is built by N76, H82, and D89. Catalysis depends on H102, which acts as the Proton donor. Substrate-binding positions include 103-104 (VS) and R113.

Belongs to the type-II 3-dehydroquinase family. As to quaternary structure, homododecamer.

It carries out the reaction 3-dehydroquinate = 3-dehydroshikimate + H2O. The protein operates within metabolic intermediate biosynthesis; chorismate biosynthesis; chorismate from D-erythrose 4-phosphate and phosphoenolpyruvate: step 3/7. In terms of biological role, catalyzes a trans-dehydration via an enolate intermediate. The protein is 3-dehydroquinate dehydratase of Rhodopseudomonas palustris (strain ATCC BAA-98 / CGA009).